The primary structure comprises 405 residues: Argininosuccinate synthase (405 aa).

ATP-binding positions include 10-18 (AYSGGLDTS) and Ala-37. Residues Tyr-88 and Ser-93 each contribute to the L-citrulline site. An ATP-binding site is contributed by Gly-118. Residues Thr-120, Asn-124, and Asp-125 each coordinate L-aspartate. L-citrulline is bound at residue Asn-124. Residues Arg-128, Ser-179, Ser-188, Glu-264, and Tyr-276 each coordinate L-citrulline.

The protein belongs to the argininosuccinate synthase family. Type 1 subfamily. Homotetramer.

It localises to the cytoplasm. The catalysed reaction is L-citrulline + L-aspartate + ATP = 2-(N(omega)-L-arginino)succinate + AMP + diphosphate + H(+). Its pathway is amino-acid biosynthesis; L-arginine biosynthesis; L-arginine from L-ornithine and carbamoyl phosphate: step 2/3. This Ectopseudomonas mendocina (strain ymp) (Pseudomonas mendocina) protein is Argininosuccinate synthase.